We begin with the raw amino-acid sequence, 256 residues long: Ras-related protein Rab-26 (256 aa).

Positions 1-53 are disordered; that stretch reads MSRKKTPKSKAGSAPATSALPAANGPRPVRPGTARPGPEAPPNGPPQPGRSSV. Positions 38 to 48 are enriched in pro residues; that stretch reads PEAPPNGPPQP. GTP-binding residues include S72, G73, V74, G75, K76, T77, C78, S95, and T96. A Mg(2+)-binding site is contributed by T77. 2 short sequence motifs (switch) span residues 86-101 and 119-136; these read GAFL…GIDF and DTAG…YYRD. Positions 96 and 119 each coordinate Mg(2+). Residues G122, N177, K178, D180, A208, and K209 each contribute to the GTP site. 2 S-geranylgeranyl cysteine lipidation sites follow: C253 and C254.

The protein belongs to the small GTPase superfamily. Rab family. The cofactor is Mg(2+).

It is found in the cell membrane. The enzyme catalyses GTP + H2O = GDP + phosphate + H(+). With respect to regulation, regulated by guanine nucleotide exchange factors (GEFs) which promote the exchange of bound GDP for free GTP. Regulated by GTPase activating proteins (GAPs) which increase the GTP hydrolysis activity. Inhibited by GDP dissociation inhibitors (GDIs). The small GTPases Rab are key regulators of intracellular membrane trafficking, from the formation of transport vesicles to their fusion with membranes. Rabs cycle between an inactive GDP-bound form and an active GTP-bound form that is able to recruit to membranes different set of downstream effectors directly responsible for vesicle formation, movement, tethering and fusion. RAB26 mediates transport of ADRA2A and ADRA2B from the Golgi to the cell membrane. Plays a role in the maturation of zymogenic granules and in pepsinogen secretion in the stomach. Plays a role in the secretion of amylase from acinar granules in the parotid gland. The polypeptide is Ras-related protein Rab-26 (RAB26) (Bos taurus (Bovine)).